Consider the following 2069-residue polypeptide: Dedicator of cytokinesis protein 9 (2069 aa).

S21, S32, S167, and S170 each carry phosphoserine. The region spanning 174–281 (GITKHGWLYK…WITILNKILQ (108 aa)) is the PH domain. The disordered stretch occupies residues 290-313 (EKRNGDSHEDDEQSKLEGSGSGLD). 2 positions are modified to phosphoserine: S433 and S443. In terms of domain architecture, C2 DOCK-type spans 640-818 (TNHLYVYPKY…PLLKISTHLV (179 aa)). A phosphoserine mark is found at S927 and S1235. Position 1241 is a phosphothreonine (T1241). A disordered region spans residues 1241 to 1282 (TPNINSVRNADSRGSLISTDSGNSLPERNSEKSNSLDKHQQS). A phosphoserine mark is found at S1255, S1261, and S1264. Residues 1255–1267 (SLISTDSGNSLPE) are compositionally biased toward polar residues. Over residues 1268 to 1280 (RNSEKSNSLDKHQ) the composition is skewed to basic and acidic residues. Positions 1605 to 2069 (KSYASTPELR…LSEIMHEQLG (465 aa)) constitute a DOCKER domain. The interaction with CDC42 stretch occupies residues 1693–2069 (DEEASMMEDV…LSEIMHEQLG (377 aa)). 2 coiled-coil regions span residues 1948 to 1982 (IEVA…KLQG) and 2034 to 2067 (NERL…MHEQ).

This sequence belongs to the DOCK family. Homodimer. Interacts preferentially with nucleotide-depleted CDC42. Widely expressed, with highest expression in heart and placenta. Expressed at intermediate level in kidney, brain, lung and skeletal muscle.

The protein resides in the endomembrane system. Its function is as follows. Guanine nucleotide-exchange factor (GEF) that activates CDC42 by exchanging bound GDP for free GTP. Overexpression induces filopodia formation. In Homo sapiens (Human), this protein is Dedicator of cytokinesis protein 9.